The sequence spans 544 residues: Zinc finger and BTB domain-containing protein 7B (544 aa).

In terms of domain architecture, BTB spans 34–115 (CDLTIRTQGL…AYTATLTTSS (82 aa)). S150 carries the post-translational modification Phosphoserine. Disordered regions lie at residues 171–221 (TTAS…ARAN) and 244–314 (GRLG…EDPI). Over residues 186-200 (PQVPLLPPPPPPPRP) the composition is skewed to pro residues. Over residues 201-210 (VARRSRKPRK) the composition is skewed to basic residues. An N6-acetyllysine; by EP300; alternate mark is found at K210 and K216. Residues K210 and K216 each participate in a glycyl lysine isopeptide (Lys-Gly) (interchain with G-Cter in ubiquitin); alternate cross-link. Residues 277–286 (FEGEEEEEEM) are compositionally biased toward acidic residues. K339 bears the N6-acetyllysine; by EP300; alternate mark. A Glycyl lysine isopeptide (Lys-Gly) (interchain with G-Cter in ubiquitin); alternate cross-link involves residue K339. A required for interaction with and acetylation by EP300 region spans residues 348-404 (MPQECPVCHKIIHGAGKLPRHMRTHTGEKPFACEVCGVRFTRNDKLKIHMRKHTGER). The segment at 350–372 (QECPVCHKIIHGAGKLPRHMRTH) adopts a C2H2-type 1 zinc-finger fold. T373 is modified (phosphothreonine). C2H2-type zinc fingers lie at residues 378 to 400 (FACEVCGVRFTRNDKLKIHMRKH) and 406 to 428 (YSCPHCPARFLHSYDLKNHMHLH). A C2H2-type 4; atypical zinc finger spans residues 434–458 (YECHLCHKAFAKEDHLQRHLKGQNC). Disordered regions lie at residues 465 to 493 (RRRKDDVAAPHYPPPSTTTSSPAGLDLSN) and 507 to 544 (WEQSATTGPPVTTQGPPEEEEEEGTPTTPQAEGAMESS). Composition is skewed to low complexity over residues 511–522 (ATTGPPVTTQGP) and 531–544 (TPTTPQAEGAMESS).

Homodimerizes. Interacts with NCL, NEDD4 and YBX1. Interacts with HNRNPU (via RNA-binding RGG-box region); the interaction facilitates the recruitment of long non-coding RNA Blnc1 by ZBTB7B. Interacts with HDAC4 and HDAC5; the interaction allows the recruitment of HDAC4 and HDAC5 on CD8 loci for deacetylation and possible inhibition of CD8 genes expression. In terms of processing, acetylated directly and specifically by EP300. EP300-mediated acetylation of Lys-210, Lys-216 and Lys-339 stabilizes the protein by antagonizing ubiquitin conjugation. Ubiquitinated, leading to proteasomal degradation. Competes with acetylation on Lys-210, Lys-216 and Lys-339. As to expression, widely expressed, with a higher level in skin. Expressed in thymus. Restricted to CD4 cells (mature single positive CD4(+) and intermediate CD4(+)CD8(+) cells). Expressed in the luminal epithelial cells in the mammary glands where is up-regulated at late pregnancy and lactation. Expression is enriched in brown fat.

The protein localises to the nucleus. Functionally, transcription regulator that acts as a key regulator of lineage commitment of immature T-cell precursors. Exerts distinct biological functions in the mammary epithelial cells and T cells in a tissue-specific manner. Necessary and sufficient for commitment of CD4 lineage, while its absence causes CD8 commitment. Development of immature T-cell precursors (thymocytes) to either the CD4 helper or CD8 killer T-cell lineages correlates precisely with their T-cell receptor specificity for major histocompatibility complex class II or class I molecules, respectively. Cross-antagonism between ZBTB7B and CBF complexes are determinative to CD4 versus CD8 cell fate decision. Suppresses RUNX3 expression and imposes CD4+ lineage fate by inducing the SOCS suppressors of cytokine signaling. induces, as a transcriptional activator, SOCS genes expression which represses RUNX3 expression and promotes the CD4+ lineage fate. During CD4 lineage commitment, associates with multiple sites at the CD8 locus, acting as a negative regulator of the CD8 promoter and enhancers by epigenetic silencing through the recruitment of class II histone deacetylases, such as HDAC4 and HDAC5, to these loci. Regulates the development of IL17-producing CD1d-restricted naural killer (NK) T cells. Also functions as an important metabolic regulator in the lactating mammary glands. Critical feed-forward regulator of insulin signaling in mammary gland lactation, directly regulates expression of insulin receptor substrate-1 (IRS-1) and insulin-induced Akt-mTOR-SREBP signaling. Transcriptional repressor of the collagen COL1A1 and COL1A2 genes. May also function as a repressor of fibronectin and possibly other extracellular matrix genes. Potent driver of brown fat development, thermogenesis and cold-induced beige fat formation. Recruits the brown fat lncRNA 1 (Blnc1):HNRNPU ribonucleoprotein complex to activate thermogenic gene expression in brown and beige adipocytes. The sequence is that of Zinc finger and BTB domain-containing protein 7B from Mus musculus (Mouse).